Reading from the N-terminus, the 271-residue chain is Putative mitochondrial carrier protein PET8 (271 aa).

3 Solcar repeats span residues 3–76, 91–177, and 187–270; these read STFL…MKQQ, AEVL…LKKK, and VSAW…VHSL. Transmembrane regions (helical) follow at residues 6–26, 51–71, 97–117, 152–168, 193–213, and 251–271; these read LASL…FFPI, GLGS…VTYD, MLSS…AEVI, GWWT…CIQF, AVCG…LDVL, and MWIS…HSLF.

It belongs to the mitochondrial carrier (TC 2.A.29) family.

The protein resides in the mitochondrion inner membrane. The polypeptide is Putative mitochondrial carrier protein PET8 (PET8) (Eremothecium gossypii (strain ATCC 10895 / CBS 109.51 / FGSC 9923 / NRRL Y-1056) (Yeast)).